The following is an 84-amino-acid chain: Putative UPF0320 protein YAL068W-A (84 aa).

The protein belongs to the UPF0320 family.

In Saccharomyces cerevisiae (strain ATCC 204508 / S288c) (Baker's yeast), this protein is Putative UPF0320 protein YAL068W-A.